The primary structure comprises 361 residues: Septin-2 (361 aa).

At Y17 the chain carries Phosphotyrosine. Residues 34–306 (KGFEFTLMVV…ENFRSERLKR (273 aa)) enclose the Septin-type G domain. The G1 motif stretch occupies residues 44–51 (GESGLGKS). Residues 44–52 (GESGLGKST), T78, G104, and 183–186 (KADT) contribute to the GTP site. Residues 101 to 104 (DTPG) form a G3 motif region. The G4 motif stretch occupies residues 182–185 (AKAD). K190 is modified (N6-acetyllysine). Y211 bears the Phosphotyrosine mark. At S218 the chain carries Phosphoserine. 3 residues coordinate GTP: G241, R256, and Y258. Residues 260-270 (WGVVEVENPEH) are important for dimerization.

This sequence belongs to the TRAFAC class TrmE-Era-EngA-EngB-Septin-like GTPase superfamily. Septin GTPase family. Septins polymerize into heterooligomeric protein complexes that form filaments, and associate with cellular membranes, actin filaments and microtubules. GTPase activity is required for filament formation. Septin filaments are assembled from asymmetrical heterotrimers, composed of SEPTIN2, SEPTIN6 and SEPTIN7 that associate head-to-head to form a hexameric unit. Interaction between SEPTIN2 and SEPTIN7 seems indirect. Also interacts with SEPTIN9 and SEPTIN5. Interaction with SEPTIN4 not detected. Component of a septin core octameric complex consisting of SEPTIN12, SEPTIN7, SEPTIN6 and SEPTIN2 or SEPTIN4 in the order 12-7-6-2-2-6-7-12 or 12-7-6-4-4-6-7-12 and located in the sperm annulus. Interacts with MAP4. Interacts with DZIP1L. As to expression, widely expressed.

The protein resides in the cytoplasm. Its subcellular location is the cytoskeleton. The protein localises to the spindle. It is found in the chromosome. It localises to the centromere. The protein resides in the kinetochore. Its subcellular location is the cleavage furrow. The protein localises to the midbody. It is found in the cell cortex. It localises to the cell projection. The protein resides in the cilium membrane. Its subcellular location is the cilium. The protein localises to the flagellum. Functionally, filament-forming cytoskeletal GTPase. Forms a filamentous structure with SEPTIN12, SEPTIN6, SEPTIN2 and probably SEPTIN4 at the sperm annulus which is required for the structural integrity and motility of the sperm tail during postmeiotic differentiation. Required for normal organization of the actin cytoskeleton. Plays a role in the biogenesis of polarized columnar-shaped epithelium by maintaining polyglutamylated microtubules, thus facilitating efficient vesicle transport, and by impeding MAP4 binding to tubulin. Required for the progression through mitosis. Forms a scaffold at the midplane of the mitotic splindle required to maintain CENPE localization at kinetochores and consequently chromosome congression. During anaphase, may be required for chromosome segregation and spindle elongation. Plays a role in ciliogenesis and collective cell movements. In cilia, required for the integrity of the diffusion barrier at the base of the primary cilium that prevents diffusion of transmembrane proteins between the cilia and plasma membranes: probably acts by regulating the assembly of the tectonic-like complex (also named B9 complex) by localizing TMEM231 protein. The protein is Septin-2 of Mus musculus (Mouse).